A 692-amino-acid chain; its full sequence is Sodium- and chloride-dependent glycine transporter 1 (692 aa).

Residues 1–34 (MIGGDTRAASAHPGMASAQGPVATPSPEQPFPGT) form a disordered region. The Cytoplasmic segment spans residues 1–94 (MIGGDTRAAS…TRGNWGNQIE (94 aa)). A run of 3 helical transmembrane segments spans residues 95 to 115 (FVLT…FPYL), 122 to 142 (GAFM…LFFM), and 174 to 194 (VSTY…YYFF). The Extracellular segment spans residues 195-271 (SSMTHVLPWA…LSDDIGNFGE (77 aa)). The next 9 membrane-spanning stretches (helical) occupy residues 272–292 (VRLP…LCLI), 301–321 (VVYF…VRGV), 346–366 (VWGD…GGLI), 393–413 (SVYA…HLGV), 436–456 (LLPI…LLGL), 492–512 (VAGF…WLLL), 516–536 (YAAS…IMYI), 556–576 (LFFQ…ILIF), and 596–616 (VAIG…YALF). Topologically, residues 617 to 692 (QLCRTDGDTL…GSSRFQDSRI (76 aa)) are cytoplasmic. T657 carries the post-translational modification Phosphothreonine. Phosphoserine is present on residues S659 and S684. The tract at residues 681-692 (SNGSSRFQDSRI) is essential for interaction with EXOC1.

This sequence belongs to the sodium:neurotransmitter symporter (SNF) (TC 2.A.22) family. SLC6A9 subfamily. Interacts with EXOC1; interaction increases the transporter capacity of SLC6A9 probably by promoting its insertion into the cell membrane. Interacts with EXOC3 and EXOC4. Expressed in the brain (at protein level). At 11 dpc, expressed in the ventral part of the ventricular zone. At 15 dpc, also expressed in adjacent mantle tissue and the meninges. Strongly expressed in 12 dpc and 15 dpc liver. In terms of tissue distribution, expressed in the brain.

The protein resides in the cell membrane. The catalysed reaction is glycine(out) + chloride(out) + 2 Na(+)(out) = glycine(in) + chloride(in) + 2 Na(+)(in). Functionally, sodium- and chloride-dependent glycine transporter which is essential for regulating glycine concentrations at inhibitory glycinergic synapses. Its function is as follows. Sodium- and chloride-dependent glycine transporter. The polypeptide is Sodium- and chloride-dependent glycine transporter 1 (Slc6a9) (Mus musculus (Mouse)).